The sequence spans 829 residues: Disintegrin and metalloproteinase domain-containing protein 23 (829 aa).

A signal peptide spans 1–55 (MKPPGSISRRPTLTGCSLPGASCGPGRCPAGPVPARAPPCRLLLVLLLLPALATS). Residues 56–283 (SRPRARGAAA…ELQWLRRRKR (228 aa)) constitute a propeptide that is removed on maturation. 4 N-linked (GlcNAc...) asparagine glycosylation sites follow: Asn72, Asn92, Asn97, and Asn260. Over 284-789 (AVNPSRGVFE…EGPKGPSATN (506 aa)) the chain is Extracellular. The Peptidase M12B domain maps to 296–493 (KYLELMIVND…GGGACLFNRP (198 aa)). 3 disulfides stabilise this stretch: Cys405–Cys488, Cys447–Cys472, and Cys449–Cys456. Positions 499 to 585 (PTECGNGYVE…QCPPNLHKQD (87 aa)) constitute a Disintegrin domain. Residues Asn544 and Asn545 are each glycosylated (N-linked (GlcNAc...) asparagine). The cysteines at positions 557 and 577 are disulfide-linked. N-linked (GlcNAc...) asparagine glycans are attached at residues Asn661 and Asn729. The EGF-like domain occupies 729 to 766 (NMSSCPLDSRGKVCSGHGVCSNEATCICDFTWAGTDCS). Cystine bridges form between Cys733–Cys748, Cys742–Cys754, and Cys756–Cys765. A helical transmembrane segment spans residues 790-810 (LIIGSIAGAILVAAIVLGGTG). Residues 811–829 (WGFKNVKKRRFDPTQQGPI) lie on the Cytoplasmic side of the membrane.

In terms of assembly, can bind to LGI1 and LGI4. In terms of tissue distribution, brain specific.

The protein resides in the cell membrane. It is found in the secreted. May play a role in cell-cell and cell-matrix interactions. This is a non-catalytic metalloprotease-like protein. This Mus musculus (Mouse) protein is Disintegrin and metalloproteinase domain-containing protein 23 (Adam23).